The sequence spans 406 residues: Ribulose bisphosphate carboxylase large chain (406 aa).

2 residues coordinate substrate: Asn-101 and Thr-151. Lys-153 serves as the catalytic Proton acceptor. Substrate is bound at residue Lys-155. Lys-179, Asp-181, and Glu-182 together coordinate Mg(2+). Lys-179 bears the N6-carboxylysine mark. The Proton acceptor role is filled by His-272. Arg-273, His-305, and Ser-357 together coordinate substrate.

It belongs to the RuBisCO large chain family. Type I subfamily. Heterohexadecamer of 8 large chains and 8 small chains; disulfide-linked. The disulfide link is formed within the large subunit homodimers. It depends on Mg(2+) as a cofactor. Post-translationally, the disulfide bond which can form in the large chain dimeric partners within the hexadecamer appears to be associated with oxidative stress and protein turnover.

It localises to the plastid. Its subcellular location is the chloroplast. The enzyme catalyses 2 (2R)-3-phosphoglycerate + 2 H(+) = D-ribulose 1,5-bisphosphate + CO2 + H2O. The catalysed reaction is D-ribulose 1,5-bisphosphate + O2 = 2-phosphoglycolate + (2R)-3-phosphoglycerate + 2 H(+). Its function is as follows. RuBisCO catalyzes two reactions: the carboxylation of D-ribulose 1,5-bisphosphate, the primary event in carbon dioxide fixation, as well as the oxidative fragmentation of the pentose substrate in the photorespiration process. Both reactions occur simultaneously and in competition at the same active site. The sequence is that of Ribulose bisphosphate carboxylase large chain (rbcL) from Trichomanes striatum (Fern).